The sequence spans 317 residues: Peroxidase 22.3 (317 aa).

An N-terminal signal peptide occupies residues 1 to 25; that stretch reads MASATNSSLSLMLLVAAAMASVASA. Residue Gln26 is modified to Pyrrolidone carboxylic acid. Disulfide bonds link Cys36-Cys111 and Cys69-Cys74. The Proton acceptor role is filled by His67. 5 residues coordinate Ca(2+): Asp68, Val71, Gly73, Asp75, and Ser77. N-linked (GlcNAc...) asparagine glycosylation occurs at Asn112. 2 disulfide bridges follow: Cys117-Cys312 and Cys196-Cys221. Pro159 serves as a coordination point for substrate. Asn171 is a glycosylation site (N-linked (GlcNAc...) asparagine). Position 189 (His189) interacts with heme b. A Ca(2+)-binding site is contributed by Thr190. Residue Asn205 is glycosylated (N-linked (GlcNAc...) asparagine). Residues Asp236, Thr239, and Asp244 each contribute to the Ca(2+) site.

It belongs to the peroxidase family. Classical plant (class III) peroxidase subfamily. Heme b is required as a cofactor. The cofactor is Ca(2+).

Its subcellular location is the secreted. It carries out the reaction H2O2 + AH2 = A + 2 H2O. Functionally, removal of H(2)O(2), oxidation of toxic reductants, biosynthesis and degradation of lignin, suberization, auxin catabolism, response to environmental stresses such as wounding, pathogen attack and oxidative stress. These functions might be dependent on each isozyme/isoform in each plant tissue. In Oryza sativa subsp. japonica (Rice), this protein is Peroxidase 22.3.